A 455-amino-acid chain; its full sequence is Argininosuccinate lyase (455 aa).

The protein belongs to the lyase 1 family. Argininosuccinate lyase subfamily.

The protein resides in the cytoplasm. The catalysed reaction is 2-(N(omega)-L-arginino)succinate = fumarate + L-arginine. Its pathway is amino-acid biosynthesis; L-arginine biosynthesis; L-arginine from L-ornithine and carbamoyl phosphate: step 3/3. In Shewanella halifaxensis (strain HAW-EB4), this protein is Argininosuccinate lyase.